The chain runs to 645 residues: 1-phosphatidylinositol 4,5-bisphosphate phosphodiesterase zeta-1 (645 aa).

The EF-hand domain occupies 42 to 77 (CHFAHVKRIFKENDRHNQGRITTEDFRTIYRCIVHR). Residues 162–306 (QDMNKPLNDY…LKFKILVKNK (145 aa)) form the PI-PLC X-box domain. Active-site residues include H177 and H222. The PI-PLC Y-box domain maps to 385 to 501 (LSDLVIYTKA…GYVLKPDFLR (117 aa)). Residues 501-625 (RDTTLGFNPN…KGYRRVPLFS (125 aa)) form the C2 domain.

As to quaternary structure, interacts via its C2 domain with PtdIns(3)P and, to a lesser extent, PtdIns(5)P in vitro. The cofactor is Ca(2+).

It localises to the nucleus. The protein resides in the cytoplasm. It is found in the perinuclear region. It carries out the reaction a 1,2-diacyl-sn-glycero-3-phospho-(1D-myo-inositol-4,5-bisphosphate) + H2O = 1D-myo-inositol 1,4,5-trisphosphate + a 1,2-diacyl-sn-glycerol + H(+). In terms of biological role, the production of the second messenger molecules diacylglycerol (DAG) and inositol 1,4,5-trisphosphate (IP3) is mediated by activated phosphatidylinositol-specific phospholipase C enzymes. In vitro, hydrolyzes PtdIns(4,5)P2 in a Ca(2+)-dependent manner. Triggers intracellular Ca(2+) oscillations in oocytes solely during M phase and is involved in inducing oocyte activation and initiating embryonic development up to the blastocyst stage. Is therefore a strong candidate for the egg-activating soluble sperm factor that is transferred from the sperm into the egg cytoplasm following gamete membrane fusion. May exert an inhibitory effect on phospholipase-C-coupled processes that depend on calcium ions and protein kinase C, including CFTR trafficking and function. The protein is 1-phosphatidylinositol 4,5-bisphosphate phosphodiesterase zeta-1 of Rattus norvegicus (Rat).